The following is a 299-amino-acid chain: Leucine zipper transcription factor-like protein 1 (299 aa).

The stretch at 96–299 forms a coiled coil; sequence LKLQTDISEL…KRLAKYESED (204 aa). The tract at residues 145–299 is interaction with BSS9; the sequence is GTTELLNKEI…KRLAKYESED (155 aa).

Belongs to the LZTFL1 family. As to quaternary structure, self-associates. Interacts with BBS9; the interaction mediates the association of LZTL1 with the BBsome complex and regulates BBSome ciliary trafficking. As to expression, highly expressed in testis. Expressed in brain, cerebellum, eye, heart, kidney, liver, lung and trachea. In small intestine, graded expression along the crypt-villus axis with high levels in the villus apex and lower levels in the crypt stem cells (at protein level). Not expressed in skeletal muscle and white adipose tissue.

The protein resides in the cytoplasm. Its function is as follows. Regulates ciliary localization of the BBSome complex. Together with the BBSome complex, controls SMO ciliary trafficking and contributes to the sonic hedgehog (SHH) pathway regulation. May play a role in neurite outgrowth. May have tumor suppressor function. This Mus musculus (Mouse) protein is Leucine zipper transcription factor-like protein 1 (Lztfl1).